A 336-amino-acid polypeptide reads, in one-letter code: Coproporphyrin III ferrochelatase (336 aa).

Positions 52 and 116 each coordinate Fe-coproporphyrin III. The Fe(2+) site is built by His172 and Glu255.

Belongs to the ferrochelatase family.

It localises to the cytoplasm. The enzyme catalyses Fe-coproporphyrin III + 2 H(+) = coproporphyrin III + Fe(2+). It functions in the pathway porphyrin-containing compound metabolism; protoheme biosynthesis. In terms of biological role, involved in coproporphyrin-dependent heme b biosynthesis. Catalyzes the insertion of ferrous iron into coproporphyrin III to form Fe-coproporphyrin III. In Mycobacterium avium (strain 104), this protein is Coproporphyrin III ferrochelatase.